The sequence spans 273 residues: CUE domain-containing protein 2-A (273 aa).

Residues 92–121 (GKENVSPKPTAEVSFMTPTSSSTESSKKIE) are disordered. Residues 135 to 178 (DAKNGIDLLLEIFPSCTVSQAQTALSMAKGDLEDAVQIIVDGKV) enclose the CUE domain.

Belongs to the CUEDC2 family. In terms of processing, phosphorylated.

It localises to the cytoplasm. The protein resides in the nucleus. In terms of biological role, may play a role in targeting proteins for ubiquitination and subsequent proteasomal degradation. This is CUE domain-containing protein 2-A (cuedc2-a) from Xenopus laevis (African clawed frog).